The chain runs to 453 residues: UDP-N-acetylmuramoylalanine--D-glutamate ligase (453 aa).

119-125 contacts ATP; the sequence is GTNGKTT.

This sequence belongs to the MurCDEF family.

The protein localises to the cytoplasm. The enzyme catalyses UDP-N-acetyl-alpha-D-muramoyl-L-alanine + D-glutamate + ATP = UDP-N-acetyl-alpha-D-muramoyl-L-alanyl-D-glutamate + ADP + phosphate + H(+). It functions in the pathway cell wall biogenesis; peptidoglycan biosynthesis. Its function is as follows. Cell wall formation. Catalyzes the addition of glutamate to the nucleotide precursor UDP-N-acetylmuramoyl-L-alanine (UMA). This chain is UDP-N-acetylmuramoylalanine--D-glutamate ligase, found in Syntrophus aciditrophicus (strain SB).